Reading from the N-terminus, the 515-residue chain is Bifunctional purine biosynthesis protein PurH (515 aa).

In terms of domain architecture, MGS-like spans 1 to 145 (MTKRALISVS…KNHASVTVVV (145 aa)).

Belongs to the PurH family.

It catalyses the reaction (6R)-10-formyltetrahydrofolate + 5-amino-1-(5-phospho-beta-D-ribosyl)imidazole-4-carboxamide = 5-formamido-1-(5-phospho-D-ribosyl)imidazole-4-carboxamide + (6S)-5,6,7,8-tetrahydrofolate. The catalysed reaction is IMP + H2O = 5-formamido-1-(5-phospho-D-ribosyl)imidazole-4-carboxamide. Its pathway is purine metabolism; IMP biosynthesis via de novo pathway; 5-formamido-1-(5-phospho-D-ribosyl)imidazole-4-carboxamide from 5-amino-1-(5-phospho-D-ribosyl)imidazole-4-carboxamide (10-formyl THF route): step 1/1. It participates in purine metabolism; IMP biosynthesis via de novo pathway; IMP from 5-formamido-1-(5-phospho-D-ribosyl)imidazole-4-carboxamide: step 1/1. This Streptococcus uberis (strain ATCC BAA-854 / 0140J) protein is Bifunctional purine biosynthesis protein PurH.